The sequence spans 398 residues: Autophagy-related protein 39 (398 aa).

Positions 8 to 11 (WNLV) match the ATG8-binding motif. Residues 15–50 (RLRKGREGEEQSSKSEISLDSLHESSFAGEDDEDFD) are disordered. Positions 52–59 (DVLSNTSS) match the ATG11-binding motif. Residues 148–164 (VIMLSSLLSMTFSYLAL) form a helical membrane-spanning segment.

As to quaternary structure, interacts with ATG8 and ATG11.

It localises to the endoplasmic reticulum membrane. The protein resides in the preautophagosomal structure membrane. Its function is as follows. Acts as a receptor for reticulophagy and nucleophagy. Directs autophagic sequestration of double-membrane vesicles derived from the nuclear envelope and perinuclear endoplasmic reticulum (pnER) into autophagosomes. Is not required for the cytoplasm-to-vacuole targeting pathway, mitophagy, pexophagy, and non-selective autophagy. The chain is Autophagy-related protein 39 from Saccharomyces cerevisiae (strain ATCC 204508 / S288c) (Baker's yeast).